The chain runs to 601 residues: Glutamine--fructose-6-phosphate aminotransferase [isomerizing] (601 aa).

Cysteine 2 acts as the Nucleophile; for GATase activity in catalysis. Residues 2-216 (CGIVGYIGTN…DKEIVIVTKD (215 aa)) enclose the Glutamine amidotransferase type-2 domain. SIS domains lie at 282–421 (ILDE…EIGD) and 453–591 (IAGE…VDKP). Lysine 596 acts as the For Fru-6P isomerization activity in catalysis.

Homodimer.

Its subcellular location is the cytoplasm. It catalyses the reaction D-fructose 6-phosphate + L-glutamine = D-glucosamine 6-phosphate + L-glutamate. Its function is as follows. Catalyzes the first step in hexosamine metabolism, converting fructose-6P into glucosamine-6P using glutamine as a nitrogen source. This chain is Glutamine--fructose-6-phosphate aminotransferase [isomerizing], found in Listeria innocua serovar 6a (strain ATCC BAA-680 / CLIP 11262).